Reading from the N-terminus, the 123-residue chain is Large ribosomal subunit protein bL20 (123 aa).

It belongs to the bacterial ribosomal protein bL20 family.

In terms of biological role, binds directly to 23S ribosomal RNA and is necessary for the in vitro assembly process of the 50S ribosomal subunit. It is not involved in the protein synthesizing functions of that subunit. This chain is Large ribosomal subunit protein bL20, found in Ehrlichia ruminantium (strain Gardel).